Reading from the N-terminus, the 134-residue chain is U-scoloptoxin(05)-Er2a (134 aa).

Positions 1-19 (MTFVVAAVVLLTVVPLATP) are cleaved as a signal peptide.

The protein belongs to the scoloptoxin-05 family. Post-translationally, contains 5 disulfide bonds. As to expression, expressed by the venom gland.

Its subcellular location is the secreted. In Ethmostigmus rubripes (Giant centipede), this protein is U-scoloptoxin(05)-Er2a.